Consider the following 404-residue polypeptide: 4-hydroxy-3-methylbut-2-enyl diphosphate reductase (404 aa).

A [4Fe-4S] cluster-binding site is contributed by Cys66. A (2E)-4-hydroxy-3-methylbut-2-enyl diphosphate-binding site is contributed by His96. His96 lines the dimethylallyl diphosphate pocket. His96 is an isopentenyl diphosphate binding site. Cys157 is a binding site for [4Fe-4S] cluster. His185 contributes to the (2E)-4-hydroxy-3-methylbut-2-enyl diphosphate binding site. His185 contributes to the dimethylallyl diphosphate binding site. Position 185 (His185) interacts with isopentenyl diphosphate. Residue Glu187 is the Proton donor of the active site. Thr250 serves as a coordination point for (2E)-4-hydroxy-3-methylbut-2-enyl diphosphate. Residue Cys288 coordinates [4Fe-4S] cluster. Residues Ser317, Ser318, Asn319, and Ser380 each coordinate (2E)-4-hydroxy-3-methylbut-2-enyl diphosphate. Ser317, Ser318, Asn319, and Ser380 together coordinate dimethylallyl diphosphate. Positions 317, 318, 319, and 380 each coordinate isopentenyl diphosphate.

It belongs to the IspH family. [4Fe-4S] cluster serves as cofactor.

It carries out the reaction isopentenyl diphosphate + 2 oxidized [2Fe-2S]-[ferredoxin] + H2O = (2E)-4-hydroxy-3-methylbut-2-enyl diphosphate + 2 reduced [2Fe-2S]-[ferredoxin] + 2 H(+). The enzyme catalyses dimethylallyl diphosphate + 2 oxidized [2Fe-2S]-[ferredoxin] + H2O = (2E)-4-hydroxy-3-methylbut-2-enyl diphosphate + 2 reduced [2Fe-2S]-[ferredoxin] + 2 H(+). It functions in the pathway isoprenoid biosynthesis; dimethylallyl diphosphate biosynthesis; dimethylallyl diphosphate from (2E)-4-hydroxy-3-methylbutenyl diphosphate: step 1/1. It participates in isoprenoid biosynthesis; isopentenyl diphosphate biosynthesis via DXP pathway; isopentenyl diphosphate from 1-deoxy-D-xylulose 5-phosphate: step 6/6. Catalyzes the conversion of 1-hydroxy-2-methyl-2-(E)-butenyl 4-diphosphate (HMBPP) into a mixture of isopentenyl diphosphate (IPP) and dimethylallyl diphosphate (DMAPP). Acts in the terminal step of the DOXP/MEP pathway for isoprenoid precursor biosynthesis. The sequence is that of 4-hydroxy-3-methylbut-2-enyl diphosphate reductase from Prochlorococcus marinus (strain MIT 9211).